The following is a 70-amino-acid chain: Large ribosomal subunit protein eL38 (70 aa).

It belongs to the eukaryotic ribosomal protein eL38 family.

The polypeptide is Large ribosomal subunit protein eL38 (rpl-38) (Ostertagia ostertagi (Brown stomach worm)).